A 223-amino-acid polypeptide reads, in one-letter code: Endonuclease NucS (223 aa).

This sequence belongs to the NucS endonuclease family.

It is found in the cytoplasm. Cleaves both 3' and 5' ssDNA extremities of branched DNA structures. This is Endonuclease NucS from Mycobacterium sp. (strain JLS).